Reading from the N-terminus, the 311-residue chain is Acetyl-coenzyme A carboxylase carboxyl transferase subunit alpha (311 aa).

One can recognise a CoA carboxyltransferase C-terminal domain in the interval 36–286; the sequence is NLEKEVAKVY…ASYFVSKLEK (251 aa).

This sequence belongs to the AccA family. In terms of assembly, acetyl-CoA carboxylase is a heterohexamer composed of biotin carboxyl carrier protein (AccB), biotin carboxylase (AccC) and two subunits each of ACCase subunit alpha (AccA) and ACCase subunit beta (AccD).

The protein localises to the cytoplasm. The catalysed reaction is N(6)-carboxybiotinyl-L-lysyl-[protein] + acetyl-CoA = N(6)-biotinyl-L-lysyl-[protein] + malonyl-CoA. It participates in lipid metabolism; malonyl-CoA biosynthesis; malonyl-CoA from acetyl-CoA: step 1/1. Component of the acetyl coenzyme A carboxylase (ACC) complex. First, biotin carboxylase catalyzes the carboxylation of biotin on its carrier protein (BCCP) and then the CO(2) group is transferred by the carboxyltransferase to acetyl-CoA to form malonyl-CoA. The protein is Acetyl-coenzyme A carboxylase carboxyl transferase subunit alpha of Campylobacter curvus (strain 525.92).